The primary structure comprises 306 residues: MAGRYAPSPSGDLHFGNLRTALLAWVFARHDGRDFLMRVEDIDEQRSTMESAERQLSDLSMLGLDWDGDVLYQSSRHDAYRAAIAQLDTYECYCSRRDIQEASRAPHAKPGMYPGTCRELTPGQRAERRAGLAAQNRHPAIRLRAEVDSFTVVDRLRGEVTGDVDDFILLRGGQEPGWAYNLAVVVDDAFQGVDQVVRGDDLLDSVARQAYLCTLLGAAIPEYVHVPLVLNARGQRLAKRDGAVTLREMLVDAPLTHIISSLAASLGYEGISTPVELLAVFDPGALSLEPFIFTGLNGSATDRMDK.

L-glutamate-binding positions include 4-8 (RYAPS) and glutamate 40. The 'HIGH' region signature appears at 7 to 17 (PSPSGDLHFGN). Positions 92, 94, 113, and 117 each coordinate Zn(2+). Positions 180 and 198 each coordinate L-glutamate. The 'KMSKS' region signature appears at 236-240 (RLAKR). Lysine 239 contacts ATP.

The protein belongs to the class-I aminoacyl-tRNA synthetase family. GluQ subfamily. Zn(2+) is required as a cofactor.

In terms of biological role, catalyzes the tRNA-independent activation of glutamate in presence of ATP and the subsequent transfer of glutamate onto a tRNA(Asp). Glutamate is transferred on the 2-amino-5-(4,5-dihydroxy-2-cyclopenten-1-yl) moiety of the queuosine in the wobble position of the QUC anticodon. This Corynebacterium efficiens (strain DSM 44549 / YS-314 / AJ 12310 / JCM 11189 / NBRC 100395) protein is Glutamyl-Q tRNA(Asp) synthetase.